The following is a 666-amino-acid chain: Non-receptor tyrosine-protein kinase TNK1 (666 aa).

Phosphoserine occurs at positions 60 and 96. In terms of domain architecture, Protein kinase spans 116 to 377 (VCRGELLGSG…PSFSHLEGLL (262 aa)). ATP is bound by residues 122 to 130 (LGSGCFGVV) and K148. D245 acts as the Proton acceptor in catalysis. Residues S255 and S411 each carry the phosphoserine modification. In terms of domain architecture, SH3 spans 380–445 (AGPSEACCVR…PASAVTLADA (66 aa)). A disordered region spans residues 446 to 493 (GGLPATRPVHRGTPARGDQHPGSIDGDRKKANLWDAPPARGQRRNMPL). A Phosphoserine modification is found at S502. The tract at residues 506–579 (VLSLGPRPTG…MGMPGARKAA (74 aa)) is disordered. Phosphothreonine is present on T514. S519 carries the phosphoserine modification. Over residues 531-541 (QGPPGLPPRPP) the composition is skewed to pro residues. Low complexity predominate over residues 542–552 (LSSSSPQPSQP). The residue at position 582 (S582) is a Phosphoserine.

Belongs to the protein kinase superfamily. Tyr protein kinase family. In terms of assembly, interacts with the SH3 domain of PLCG1 via its Pro-rich domain. Autophosphorylated on tyrosine residues. As to expression, expressed in all umbilical cord blood, bone marrow and adult blood cell sub-populations and in several leukemia cell lines. Highly expressed in fetal blood, brain, lung, liver and kidney. Detected at lower levels in adult prostate, testis, ovary, small intestine and colon. Not expressed in adult lung, liver, kidney or brain.

The protein resides in the cytoplasm. The protein localises to the membrane. The enzyme catalyses L-tyrosyl-[protein] + ATP = O-phospho-L-tyrosyl-[protein] + ADP + H(+). Its function is as follows. Involved in negative regulation of cell growth. Has tumor suppressor properties. Plays a negative regulatory role in the Ras-MAPK pathway. May function in signaling pathways utilized broadly during fetal development and more selectively in adult tissues and in cells of the lymphohematopoietic system. Could specifically be involved in phospholipid signal transduction. This Homo sapiens (Human) protein is Non-receptor tyrosine-protein kinase TNK1.